The chain runs to 93 residues: Co-chaperonin GroES (93 aa).

Belongs to the GroES chaperonin family. In terms of assembly, heptamer of 7 subunits arranged in a ring. Interacts with the chaperonin GroEL.

The protein resides in the cytoplasm. Its function is as follows. Together with the chaperonin GroEL, plays an essential role in assisting protein folding. The GroEL-GroES system forms a nano-cage that allows encapsulation of the non-native substrate proteins and provides a physical environment optimized to promote and accelerate protein folding. GroES binds to the apical surface of the GroEL ring, thereby capping the opening of the GroEL channel. In Streptococcus gordonii, this protein is Co-chaperonin GroES.